We begin with the raw amino-acid sequence, 402 residues long: Multidrug resistance protein MdtH (402 aa).

Residues 1–12 (MSRVSQARNLGK) are Cytoplasmic-facing. A helical transmembrane segment spans residues 13–33 (YFLLIDNMLVVLGFFVVFPLI). The Periplasmic segment spans residues 34-98 (SIRFVDQMGW…GFATMGIAHE (65 aa)). Residues 99-116 (PWLLWFSCLLSGLGGTLF) form a helical membrane-spanning segment. The Cytoplasmic segment spans residues 117-138 (DPPRSALVVKLIRPQQRGRFFS). A helical membrane pass occupies residues 139-159 (LLMMQDSAGAVIGALLGSWLL). At 160–164 (QYDFR) the chain is on the periplasmic side. A helical transmembrane segment spans residues 165–185 (LVCATGAVLFVLCAAFNAWLL). At 186–213 (PAWKLSTVRTPVREGMTRVMRDKRFVTY) the chain is on the cytoplasmic side. A helical transmembrane segment spans residues 214 to 234 (VLTLAGYYMLAVQVMLMLPIM). Over 235 to 243 (VNDVAGAPS) the chain is Periplasmic. The helical transmembrane segment at 244–264 (AVKWMYAIEACLSLTLLYPIA) threads the bilayer. The Cytoplasmic segment spans residues 265–276 (RWSEKHFRLEHR). A helical transmembrane segment spans residues 277–297 (LMAGLLIMSLSMMPVGMVSGL). Over 298 to 299 (QQ) the chain is Periplasmic. Residues 300–320 (LFNLICLFYIGSIIAEPARET) form a helical membrane-spanning segment. At 321–339 (LSASLADARARGSYMGFSR) the chain is on the cytoplasmic side. Residues 340–360 (LGLAIGGAIGYIGGGWLFDLG) form a helical membrane-spanning segment. At 361–367 (KSAHQPE) the chain is on the periplasmic side. A helical membrane pass occupies residues 368–388 (LPWMMLGIIGIFTFLALGWQF). At 389–402 (SQKRAARRLLERDA) the chain is on the cytoplasmic side.

Belongs to the major facilitator superfamily. DHA1 family. MdtH (TC 2.A.1.2.21) subfamily.

The protein localises to the cell inner membrane. Confers resistance to norfloxacin and enoxacin. This is Multidrug resistance protein MdtH from Escherichia coli O9:H4 (strain HS).